The primary structure comprises 256 residues: 3-hydroxy-5-phosphonooxypentane-2,4-dione thiolase (256 aa).

The active-site Schiff-base intermediate with substrate is K168.

This sequence belongs to the DeoC/FbaB aldolase family. Homodecamer.

The protein resides in the cytoplasm. It carries out the reaction dihydroxyacetone phosphate + acetyl-CoA = 3-hydroxy-2,4-dioxopentyl phosphate + CoA. In terms of biological role, involved in the degradation of phospho-AI-2, thereby terminating induction of the lsr operon and closing the AI-2 signaling cycle. Catalyzes the transfer of an acetyl moiety from 3-hydroxy-5-phosphonooxypentane-2,4-dione to CoA to form glycerone phosphate and acetyl-CoA. The sequence is that of 3-hydroxy-5-phosphonooxypentane-2,4-dione thiolase (lsrF) from Shigella flexneri serotype 5b (strain 8401).